A 260-amino-acid polypeptide reads, in one-letter code: Thiazole synthase (260 aa).

Lysine 102 (schiff-base intermediate with DXP) is an active-site residue. Residues glycine 163, 189 to 190, and 211 to 212 each bind 1-deoxy-D-xylulose 5-phosphate; these read AG and NT.

This sequence belongs to the ThiG family. In terms of assembly, homotetramer. Forms heterodimers with either ThiH or ThiS.

The protein resides in the cytoplasm. It carries out the reaction [ThiS sulfur-carrier protein]-C-terminal-Gly-aminoethanethioate + 2-iminoacetate + 1-deoxy-D-xylulose 5-phosphate = [ThiS sulfur-carrier protein]-C-terminal Gly-Gly + 2-[(2R,5Z)-2-carboxy-4-methylthiazol-5(2H)-ylidene]ethyl phosphate + 2 H2O + H(+). It participates in cofactor biosynthesis; thiamine diphosphate biosynthesis. Its function is as follows. Catalyzes the rearrangement of 1-deoxy-D-xylulose 5-phosphate (DXP) to produce the thiazole phosphate moiety of thiamine. Sulfur is provided by the thiocarboxylate moiety of the carrier protein ThiS. In vitro, sulfur can be provided by H(2)S. In Citrifermentans bemidjiense (strain ATCC BAA-1014 / DSM 16622 / JCM 12645 / Bem) (Geobacter bemidjiensis), this protein is Thiazole synthase.